The chain runs to 454 residues: Bifunctional protein GlmU (454 aa).

A pyrophosphorylase region spans residues M1 to R232. UDP-N-acetyl-alpha-D-glucosamine contacts are provided by residues L11–G14, K25, Q78, and G83–T84. D108 serves as a coordination point for Mg(2+). 4 residues coordinate UDP-N-acetyl-alpha-D-glucosamine: G144, E158, N173, and N230. Position 230 (N230) interacts with Mg(2+). The segment at A233–S253 is linker. The tract at residues G254 to K454 is N-acetyltransferase. R319 and K337 together coordinate UDP-N-acetyl-alpha-D-glucosamine. H349 acts as the Proton acceptor in catalysis. Residues Y352 and N363 each coordinate UDP-N-acetyl-alpha-D-glucosamine. Acetyl-CoA-binding positions include A366, N372–Y373, S391, S409, and R426.

In the N-terminal section; belongs to the N-acetylglucosamine-1-phosphate uridyltransferase family. It in the C-terminal section; belongs to the transferase hexapeptide repeat family. In terms of assembly, homotrimer. Mg(2+) is required as a cofactor.

The protein resides in the cytoplasm. The catalysed reaction is alpha-D-glucosamine 1-phosphate + acetyl-CoA = N-acetyl-alpha-D-glucosamine 1-phosphate + CoA + H(+). The enzyme catalyses N-acetyl-alpha-D-glucosamine 1-phosphate + UTP + H(+) = UDP-N-acetyl-alpha-D-glucosamine + diphosphate. The protein operates within nucleotide-sugar biosynthesis; UDP-N-acetyl-alpha-D-glucosamine biosynthesis; N-acetyl-alpha-D-glucosamine 1-phosphate from alpha-D-glucosamine 6-phosphate (route II): step 2/2. Its pathway is nucleotide-sugar biosynthesis; UDP-N-acetyl-alpha-D-glucosamine biosynthesis; UDP-N-acetyl-alpha-D-glucosamine from N-acetyl-alpha-D-glucosamine 1-phosphate: step 1/1. It participates in bacterial outer membrane biogenesis; LPS lipid A biosynthesis. In terms of biological role, catalyzes the last two sequential reactions in the de novo biosynthetic pathway for UDP-N-acetylglucosamine (UDP-GlcNAc). The C-terminal domain catalyzes the transfer of acetyl group from acetyl coenzyme A to glucosamine-1-phosphate (GlcN-1-P) to produce N-acetylglucosamine-1-phosphate (GlcNAc-1-P), which is converted into UDP-GlcNAc by the transfer of uridine 5-monophosphate (from uridine 5-triphosphate), a reaction catalyzed by the N-terminal domain. In Brucella abortus (strain S19), this protein is Bifunctional protein GlmU.